The primary structure comprises 378 residues: UDP-N-acetylglucosamine--N-acetylmuramyl-(pentapeptide) pyrophosphoryl-undecaprenol N-acetylglucosamine transferase (378 aa).

UDP-N-acetyl-alpha-D-glucosamine is bound by residues Thr-14 to Gly-16, Asn-125, Arg-165, Ser-193, and Gln-293.

Belongs to the glycosyltransferase 28 family. MurG subfamily.

The protein localises to the cell inner membrane. The enzyme catalyses di-trans,octa-cis-undecaprenyl diphospho-N-acetyl-alpha-D-muramoyl-L-alanyl-D-glutamyl-meso-2,6-diaminopimeloyl-D-alanyl-D-alanine + UDP-N-acetyl-alpha-D-glucosamine = di-trans,octa-cis-undecaprenyl diphospho-[N-acetyl-alpha-D-glucosaminyl-(1-&gt;4)]-N-acetyl-alpha-D-muramoyl-L-alanyl-D-glutamyl-meso-2,6-diaminopimeloyl-D-alanyl-D-alanine + UDP + H(+). The protein operates within cell wall biogenesis; peptidoglycan biosynthesis. Cell wall formation. Catalyzes the transfer of a GlcNAc subunit on undecaprenyl-pyrophosphoryl-MurNAc-pentapeptide (lipid intermediate I) to form undecaprenyl-pyrophosphoryl-MurNAc-(pentapeptide)GlcNAc (lipid intermediate II). In Bartonella tribocorum (strain CIP 105476 / IBS 506), this protein is UDP-N-acetylglucosamine--N-acetylmuramyl-(pentapeptide) pyrophosphoryl-undecaprenol N-acetylglucosamine transferase.